We begin with the raw amino-acid sequence, 722 residues long: Putative tyrosine-protein kinase in cps region (722 aa).

The next 2 membrane-spanning stretches (helical) occupy residues 31–53 (IIIA…ATPI) and 427–449 (IVVL…VRIL).

This sequence belongs to the etk/wzc family. Autophosphorylated on tyrosine residue(s).

The protein resides in the cell inner membrane. The enzyme catalyses L-tyrosyl-[protein] + ATP = O-phospho-L-tyrosyl-[protein] + ADP + H(+). Its pathway is glycan metabolism; exopolysaccharide biosynthesis. The chain is Putative tyrosine-protein kinase in cps region from Klebsiella pneumoniae.